Here is a 320-residue protein sequence, read N- to C-terminus: MANTIKASVVQASTAAYSLPDTLDKLEKLTRLAKERDGAQLAVFPEAFIGGYPKMSTFGLVVGDRQPEGRDEFVRYAKAAIEIPSPAITRIEQISRETNVFIVVGVIERDAGTLYCTAVFVDPEKGYVDKHRKLVPTAMERVIWGQGDGSTLPVLDKSFESASAPGSTVNTKLSATICWENYMPLLRTYYYSQGTQIYCAPTVDARPAWQHTMTHIALEGRCFVLSACQFAQEKDYPPDHAVANASARDPNNVMIAGGSVIISPLGKVLAGPLLDAEGVISAELDLDDVLRGKFDLDVTGHYARNDVFEFKLREPPATSS.

The CN hydrolase domain maps to 5-286 (IKASVVQAST…EGVISAELDL (282 aa)). Residue Glu46 is the Proton acceptor of the active site. The active site involves Lys133. The Nucleophile role is filled by Cys178.

The protein belongs to the carbon-nitrogen hydrolase superfamily. Nitrilase family.

The catalysed reaction is a nitrile + 2 H2O = a carboxylate + NH4(+). Its function is as follows. Nitrilase that hydrolyzes preferentially fumaronitrile, while 3-phenylpropionitrile, beta-cyano-L-alanine and 4-cyanopyridine are transformed at much lower rates. The polypeptide is Arylacetonitrilase (nit) (Trametes versicolor (strain FP-101664) (White-rot fungus)).